Consider the following 406-residue polypeptide: Elongation factor Tu (406 aa).

The tr-type G domain maps to 10 to 215; sequence KPHVNVGTIG…AIDEYIPTPV (206 aa). The segment at 19–26 is G1; it reads GHVDHGKT. GTP is bound at residue 19 to 26; that stretch reads GHVDHGKT. Thr26 contributes to the Mg(2+) binding site. The segment at 61–65 is G2; the sequence is GITIN. A G3 region spans residues 82-85; that stretch reads DCPG. Residues 82–86 and 137–140 each bind GTP; these read DCPGH and NKVD. Residues 137 to 140 form a G4 region; it reads NKVD. The interval 175 to 177 is G5; it reads SAL.

The protein belongs to the TRAFAC class translation factor GTPase superfamily. Classic translation factor GTPase family. EF-Tu/EF-1A subfamily. As to quaternary structure, monomer.

It is found in the cytoplasm. The enzyme catalyses GTP + H2O = GDP + phosphate + H(+). Its function is as follows. GTP hydrolase that promotes the GTP-dependent binding of aminoacyl-tRNA to the A-site of ribosomes during protein biosynthesis. This Thermus aquaticus protein is Elongation factor Tu.